The chain runs to 226 residues: Ribosomal RNA small subunit methyltransferase G (226 aa).

S-adenosyl-L-methionine contacts are provided by residues Gly95, Leu100, 146-147 (VE), and Arg159.

It belongs to the methyltransferase superfamily. RNA methyltransferase RsmG family.

It is found in the cytoplasm. It catalyses the reaction guanosine(527) in 16S rRNA + S-adenosyl-L-methionine = N(7)-methylguanosine(527) in 16S rRNA + S-adenosyl-L-homocysteine. In terms of biological role, specifically methylates the N7 position of guanine in position 527 of 16S rRNA. In Acidovorax sp. (strain JS42), this protein is Ribosomal RNA small subunit methyltransferase G.